The chain runs to 122 residues: Small ribosomal subunit protein uS13 (122 aa).

Residues 95–122 (GLPVRGQRTHTNARTRKGPAKPIAGKKK) form a disordered region.

The protein belongs to the universal ribosomal protein uS13 family. In terms of assembly, part of the 30S ribosomal subunit. Forms a loose heterodimer with protein S19. Forms two bridges to the 50S subunit in the 70S ribosome.

Functionally, located at the top of the head of the 30S subunit, it contacts several helices of the 16S rRNA. In the 70S ribosome it contacts the 23S rRNA (bridge B1a) and protein L5 of the 50S subunit (bridge B1b), connecting the 2 subunits; these bridges are implicated in subunit movement. Contacts the tRNAs in the A and P-sites. This is Small ribosomal subunit protein uS13 from Xanthobacter autotrophicus (strain ATCC BAA-1158 / Py2).